Consider the following 55-residue polypeptide: Preprotein translocase subunit SecG (55 aa).

The Cytoplasmic segment spans residues 1–29 (MAKKSGSGLQSSAGLMRYYEADKNAVQVQ). Residues 30 to 51 (PKVVLIVGAIVGIAVLFLSAVN) form a helical membrane-spanning segment. Residues 52-55 (GFWP) lie on the Extracellular side of the membrane.

Belongs to the SEC61-beta family. As to quaternary structure, component of the protein translocase complex. Heterotrimer consisting of alpha (SecY), beta (SecG) and gamma (SecE) subunits. Can form oligomers of the heterotrimer.

It localises to the cell membrane. Involved in protein export. The function of the beta subunit is unknown, but it may be involved in stabilization of the trimeric complex. The sequence is that of Preprotein translocase subunit SecG from Methanosarcina barkeri (strain Fusaro / DSM 804).